Here is a 368-residue protein sequence, read N- to C-terminus: Chaperone protein DnaJ (368 aa).

The region spanning D5–G70 is the J domain. The segment at G124–H201 adopts a CR-type zinc-finger fold. Zn(2+)-binding residues include C137, C140, C153, C156, C175, C178, C189, and C192. 4 CXXCXGXG motif repeats span residues C137–G144, C153–G160, C175–G182, and C189–G196.

It belongs to the DnaJ family. Homodimer. It depends on Zn(2+) as a cofactor.

The protein resides in the cytoplasm. Functionally, participates actively in the response to hyperosmotic and heat shock by preventing the aggregation of stress-denatured proteins and by disaggregating proteins, also in an autonomous, DnaK-independent fashion. Unfolded proteins bind initially to DnaJ; upon interaction with the DnaJ-bound protein, DnaK hydrolyzes its bound ATP, resulting in the formation of a stable complex. GrpE releases ADP from DnaK; ATP binding to DnaK triggers the release of the substrate protein, thus completing the reaction cycle. Several rounds of ATP-dependent interactions between DnaJ, DnaK and GrpE are required for fully efficient folding. Also involved, together with DnaK and GrpE, in the DNA replication of plasmids through activation of initiation proteins. The protein is Chaperone protein DnaJ of Xylella fastidiosa (strain M23).